The following is a 120-amino-acid chain: NAD(P)H-quinone oxidoreductase subunit 3, chloroplastic (120 aa).

3 consecutive transmembrane segments (helical) span residues 14–34, 64–84, and 88–108; these read LIIS…LAPI, MFAL…PWAM, and VLGV…IVGS.

Belongs to the complex I subunit 3 family. As to quaternary structure, NDH is composed of at least 16 different subunits, 5 of which are encoded in the nucleus.

It is found in the plastid. The protein localises to the chloroplast thylakoid membrane. The catalysed reaction is a plastoquinone + NADH + (n+1) H(+)(in) = a plastoquinol + NAD(+) + n H(+)(out). It carries out the reaction a plastoquinone + NADPH + (n+1) H(+)(in) = a plastoquinol + NADP(+) + n H(+)(out). Its function is as follows. NDH shuttles electrons from NAD(P)H:plastoquinone, via FMN and iron-sulfur (Fe-S) centers, to quinones in the photosynthetic chain and possibly in a chloroplast respiratory chain. The immediate electron acceptor for the enzyme in this species is believed to be plastoquinone. Couples the redox reaction to proton translocation, and thus conserves the redox energy in a proton gradient. The chain is NAD(P)H-quinone oxidoreductase subunit 3, chloroplastic from Cicer arietinum (Chickpea).